The primary structure comprises 105 residues: Large ribosomal subunit protein uL24 (105 aa).

The segment covering 77–93 (DGKPTRVGYRKDDETGK) has biased composition (basic and acidic residues). A disordered region spans residues 77–105 (DGKPTRVGYRKDDETGKNVRIAKSNGKDL).

The protein belongs to the universal ribosomal protein uL24 family. As to quaternary structure, part of the 50S ribosomal subunit.

Functionally, one of two assembly initiator proteins, it binds directly to the 5'-end of the 23S rRNA, where it nucleates assembly of the 50S subunit. Its function is as follows. One of the proteins that surrounds the polypeptide exit tunnel on the outside of the subunit. The polypeptide is Large ribosomal subunit protein uL24 (Mycolicibacterium gilvum (strain PYR-GCK) (Mycobacterium gilvum (strain PYR-GCK))).